A 307-amino-acid polypeptide reads, in one-letter code: Chlorophyll a-b binding protein 1, chloroplastic (307 aa).

Residues 1–44 constitute a chloroplast transit peptide; it reads MAPYSVVASVLAAAPPQQSGSVRQLPSTINRAITQRSQSRHVAS. The tract at residues 34–54 is disordered; sequence TQRSQSRHVASASSASSPTTM. Chlorophyll a is bound by residues Thr52, Glu63, Ile64, Gly65, Tyr68, Leu81, Pro86, Arg89, Gly90, Phe91, and Asp92. Residue Leu96 participates in loroxanthin binding. The helical transmembrane segment at 111–143 threads the bilayer; the sequence is NYDESRLRWLLEGELYNGRLAMLAVVGVLTVEA. Chlorophyll a contacts are provided by Leu120, Glu124, Asn127, Met132, and Lys146. Loroxanthin is bound at residue Trp149. Residues Glu151, Tyr163, His171, Glu178, Arg181, Glu190, Arg198, and Asp200 each contribute to the chlorophyll a site. The helical transmembrane segment at 161–186 threads the bilayer; sequence TPYVVAVVGGHLAFALLEKKRLENFR. Positions 200 and 202 each coordinate all-trans-violaxanthin. Chlorophyll a-binding residues include Leu204, Asn208, Tyr214, Asn215, Ala218, Asn222, and Arg224. A helical transmembrane segment spans residues 213–238; sequence DYNRQAEVRNCRLAMLTFLGFSVQAW. Phe230 contributes to the loroxanthin binding site. Phe233 provides a ligand contact to all-trans-violaxanthin. A chlorophyll a-binding site is contributed by Gln236. Pro244 provides a ligand contact to all-trans-violaxanthin. 8 residues coordinate chlorophyll a: Asn247, His251, Pro255, Phe256, Ala258, Asn259, Ile260, and Phe274. A helical transmembrane segment spans residues 265 to 289; sequence DRGTNVVAIFSAFAAVMHIAELARE.

It belongs to the light-harvesting chlorophyll a/b-binding (LHC) protein family. Homooligomer. Component of a light-harvesting complex (LHC) consisting of 11 chlorophyll a-b binding proteins. The cofactor is Binds 11 chlorophylls (Chl-a and Chl-b) and the 2 carotenoids violaxanthin and loroxanthin..

It is found in the plastid. Its subcellular location is the chloroplast thylakoid membrane. In terms of biological role, component of a light-harvesting complex (LHC). The LHC functions as a light receptor, it captures and delivers excitation energy to photosystems with which it is closely associated. Functions in a far-red LHC by absorbing far-red light and promoting photosystem II (PSII) excitation, likely with entropy-driven uphill excitation energy transfer. Exhibits a typical absorption band at 671 nm (Qy band), as well as a large far-red absorption band at 706.5 together with fluorescence emission at around 713 nm (F713). The polypeptide is Chlorophyll a-b binding protein 1, chloroplastic (Prasiola crispa (Green alga)).